We begin with the raw amino-acid sequence, 244 residues long: MEAPRGWLVISVLAISLASSVTEDVCRAPDGTHGSAGIPGRPGRPGLKGERGEPGAPAIQTGIRGLKGDQGDPGPPGNPGRMGYPGPSGPMGPAGLPGLKGTKGSPGNIKDQPRPAFSAVGPNSVSRDNVVVFGKVITNQENVYQNNTGRFRCSVPGYYYFTFQVVSNWDICLSIRSSRRDQIQPLGFCDFNSKGFFQVVSGGTVLHLQQGDQVWIEKDPSKGRIYHGSEADSIFSGFLIFPSA.

A signal peptide spans 1-22; the sequence is MEAPRGWLVISVLAISLASSVT. The tract at residues 28 to 94 is disordered; the sequence is APDGTHGSAG…PGPSGPMGPA (67 aa). One can recognise a Collagen-like domain in the interval 31–109; the sequence is GTHGSAGIPG…KGTKGSPGNI (79 aa). Pro39 and Pro45 each carry 4-hydroxyproline. A 5-hydroxylysine modification is found at Lys48. O-linked (Gal...) hydroxylysine glycosylation occurs at Lys48. Pro54 and Pro57 each carry 4-hydroxyproline. Lys67 is subject to 5-hydroxylysine. The O-linked (Gal...) hydroxylysine glycan is linked to Lys67. 4-hydroxyproline is present on residues Pro73, Pro79, and Pro85. The segment covering 79–94 has biased composition (low complexity); it reads PGRMGYPGPSGPMGPA. At Lys100 the chain carries 5-hydroxylysine. Lys100 carries O-linked (Gal...) hydroxylysine glycosylation. The 135-residue stretch at 110-244 folds into the C1q domain; the sequence is KDQPRPAFSA…FSGFLIFPSA (135 aa). N-linked (GlcNAc...) asparagine glycosylation occurs at Asn146. Residues Cys172 and Cys189 are joined by a disulfide bond. Gln198 is a Ca(2+) binding site.

Core component of the complement C1 complex, a calcium-dependent complex composed of 1 molecule of the C1Q subcomplex, 2 molecules of C1R and 2 molecules of C1S. The C1Q subcomplex is composed 18 subunits: 3 chains of C1QA, C1QB, and C1QC trimerize to form 6 collagen-like triple helices connected to six globular ligand-recognition modules (C1q domain). Interacts with CR1 (via Sushi 24 and Sushi 25 domains). Interacts (via C-terminus) with CD33; this interaction activates CD33 inhibitory motifs. Post-translationally, O-linked glycans are assumed to be the Glc-Gal disaccharides typically found as secondary modifications of hydroxylated lysines in collagen-like domains.

Its subcellular location is the secreted. It is found in the cell surface. With respect to regulation, the C1Q subcomplex is inhibited by sulfated molecules, such as triterpenoid sulfates, heparan sulfate, or chondroitin sulfates. Its function is as follows. Core component of the complement C1 complex, a multiprotein complex that initiates the classical pathway of the complement system, a cascade of proteins that leads to phagocytosis and breakdown of pathogens and signaling that strengthens the adaptive immune system. The classical complement pathway is initiated by the C1Q subcomplex of the C1 complex, which specifically binds IgG or IgM immunoglobulins complexed with antigens, forming antigen-antibody complexes on the surface of pathogens: C1QA, together with C1QB and C1QC, specifically recognizes and binds the Fc regions of IgG or IgM via its C1q domain. Immunoglobulin-binding activates the proenzyme C1R, which cleaves C1S, initiating the proteolytic cascade of the complement system. The C1Q subcomplex is activated by a hexamer of IgG complexed with antigens, while it is activated by a pentameric IgM. The C1Q subcomplex also recognizes and binds phosphatidylserine exposed on the surface of cells undergoing programmed cell death, possibly promoting activation of the complement system. In Bos taurus (Bovine), this protein is Complement C1q subcomponent subunit A (C1QA).